The sequence spans 296 residues: Chondrolectin (296 aa).

The signal sequence occupies residues 1-20; that stretch reads MRATLRILCALTFLVSCSRG. Residues 21-238 are Extracellular-facing; sequence ARVVSGQTVC…RLIIAGPSSM (218 aa). The C-type lectin domain maps to 38–187; the sequence is CYKIAYFKDV…CNMKHNFICK (150 aa). The span at 197-221 shows a compositional bias: basic and acidic residues; sequence VQSDRPGGHDVDLSTEDKEDRRTPP. Residues 197–229 are disordered; the sequence is VQSDRPGGHDVDLSTEDKEDRRTPPTDEDESPR. A helical transmembrane segment spans residues 239–266; the sequence is LLIYVIIPTIPLLLLILVASGTCCFQML. The Cytoplasmic portion of the chain corresponds to 267–296; that stretch reads SKSKPRTKTSVNQSTLWISKTPKIDSGMEV.

In terms of tissue distribution, expressed in developing motor neurons.

Its subcellular location is the membrane. Plays a role in the development of the nervous system such as in neurite outgrowth and elongation. Involved in motor axon growth and guidance. Required for correct interactions of motor axons with the horizontal myoseptum. The chain is Chondrolectin (chodl) from Danio rerio (Zebrafish).